Consider the following 243-residue polypeptide: Small ribosomal subunit protein uS3 (243 aa).

Residues 39 to 107 (LRKLISKELQ…KIKLNIKEIH (69 aa)) enclose the KH type-2 domain. Residues 212 to 243 (VAKSPAEPATTAPTPAPERRERQPRRNSNASA) are disordered.

It belongs to the universal ribosomal protein uS3 family. As to quaternary structure, part of the 30S ribosomal subunit. Forms a tight complex with proteins S10 and S14.

Binds the lower part of the 30S subunit head. Binds mRNA in the 70S ribosome, positioning it for translation. In Chloroflexus aurantiacus (strain ATCC 29364 / DSM 637 / Y-400-fl), this protein is Small ribosomal subunit protein uS3.